We begin with the raw amino-acid sequence, 229 residues long: PKHD-type hydroxylase RPD_3334 (229 aa).

The region spanning 78-180 is the Fe2OG dioxygenase domain; that stretch reads QIFPPLFNRY…RVASFFWLQS (103 aa). Fe cation contacts are provided by histidine 98, aspartate 100, and histidine 161. 2-oxoglutarate is bound at residue arginine 171.

It depends on Fe(2+) as a cofactor. Requires L-ascorbate as cofactor.

This Rhodopseudomonas palustris (strain BisB5) protein is PKHD-type hydroxylase RPD_3334.